The primary structure comprises 136 residues: uncharacterized protein (136 aa).

This is an uncharacterized protein from Enterobacteria phage T4 (Bacteriophage T4).